The primary structure comprises 389 residues: Pregnancy-associated glycoprotein 1 (389 aa).

A signal peptide spans 1–15 (MKWLVILGLVALSEC). Residues 76–386 (YVGNITIGTP…DRGQNRIGLR (311 aa)) enclose the Peptidase A1 domain. Asn-79 is a glycosylation site (N-linked (GlcNAc...) asparagine). Asp-94 is a catalytic residue. Residues Cys-107 and Cys-112 are joined by a disulfide bond. An N-linked (GlcNAc...) asparagine glycan is attached at Asn-130. A disulfide bond links Cys-268 and Cys-272. Asp-277 is an active-site residue. A disulfide bond links Cys-311 and Cys-345. N-linked (GlcNAc...) asparagine glycosylation is present at Asn-348.

The protein belongs to the peptidase A1 family. In terms of tissue distribution, expressed throughout the chorion, with the signal localized exclusively over the trophectoderm.

Its subcellular location is the secreted. The protein resides in the extracellular space. Functionally, appears to be proteolytically inactive. In Sus scrofa (Pig), this protein is Pregnancy-associated glycoprotein 1.